A 27-amino-acid chain; its full sequence is U18-ctenitoxin-Co1a (27 aa).

The protein belongs to the u18-CNTX family. In terms of tissue distribution, expressed by the venom gland.

The protein resides in the secreted. In terms of biological role, not toxic to mice by intracerebroventricular injection. The sequence is that of U18-ctenitoxin-Co1a from Ctenus ornatus (Brazilian spider).